Consider the following 689-residue polypeptide: Glycine--tRNA ligase beta subunit (689 aa).

The protein belongs to the class-II aminoacyl-tRNA synthetase family. As to quaternary structure, tetramer of two alpha and two beta subunits.

It is found in the cytoplasm. It catalyses the reaction tRNA(Gly) + glycine + ATP = glycyl-tRNA(Gly) + AMP + diphosphate. This chain is Glycine--tRNA ligase beta subunit, found in Dictyoglomus thermophilum (strain ATCC 35947 / DSM 3960 / H-6-12).